The sequence spans 203 residues: Molybdenum cofactor guanylyltransferase (203 aa).

Residues 12–14, Lys-25, Asn-53, Asp-71, and Asp-101 each bind GTP; that span reads LAG. Position 101 (Asp-101) interacts with Mg(2+).

The protein belongs to the MobA family. As to quaternary structure, monomer. It depends on Mg(2+) as a cofactor.

The protein localises to the cytoplasm. The enzyme catalyses Mo-molybdopterin + GTP + H(+) = Mo-molybdopterin guanine dinucleotide + diphosphate. Transfers a GMP moiety from GTP to Mo-molybdopterin (Mo-MPT) cofactor (Moco or molybdenum cofactor) to form Mo-molybdopterin guanine dinucleotide (Mo-MGD) cofactor. This Cupriavidus metallidurans (strain ATCC 43123 / DSM 2839 / NBRC 102507 / CH34) (Ralstonia metallidurans) protein is Molybdenum cofactor guanylyltransferase.